The primary structure comprises 860 residues: DNA mismatch repair protein MutS (860 aa).

608–615 contacts ATP; the sequence is GPNMAGKS.

Belongs to the DNA mismatch repair MutS family.

This protein is involved in the repair of mismatches in DNA. It is possible that it carries out the mismatch recognition step. This protein has a weak ATPase activity. The sequence is that of DNA mismatch repair protein MutS from Borrelia turicatae (strain 91E135).